The primary structure comprises 310 residues: ADP-L-glycero-D-manno-heptose-6-epimerase (310 aa).

Residues 10-11 (FI), 31-32 (DN), lysine 38, lysine 53, 75-79 (EGACS), and asparagine 92 each bind NADP(+). Tyrosine 140 (proton acceptor) is an active-site residue. An NADP(+)-binding site is contributed by lysine 144. Asparagine 169 lines the substrate pocket. NADP(+)-binding residues include valine 170 and lysine 178. Lysine 178 functions as the Proton acceptor in the catalytic mechanism. Substrate contacts are provided by residues serine 180, histidine 187, 201–204 (FSGS), arginine 209, and tyrosine 272.

This sequence belongs to the NAD(P)-dependent epimerase/dehydratase family. HldD subfamily. Homopentamer. The cofactor is NADP(+).

The enzyme catalyses ADP-D-glycero-beta-D-manno-heptose = ADP-L-glycero-beta-D-manno-heptose. It functions in the pathway nucleotide-sugar biosynthesis; ADP-L-glycero-beta-D-manno-heptose biosynthesis; ADP-L-glycero-beta-D-manno-heptose from D-glycero-beta-D-manno-heptose 7-phosphate: step 4/4. Catalyzes the interconversion between ADP-D-glycero-beta-D-manno-heptose and ADP-L-glycero-beta-D-manno-heptose via an epimerization at carbon 6 of the heptose. The protein is ADP-L-glycero-D-manno-heptose-6-epimerase of Pectobacterium carotovorum subsp. carotovorum (strain PC1).